Here is a 217-residue protein sequence, read N- to C-terminus: 3,4-dihydroxy-2-butanone 4-phosphate synthase (217 aa).

D-ribulose 5-phosphate contacts are provided by residues 40-41, aspartate 45, 153-157, and glutamate 177; these read RE and RRGHT. Glutamate 41 provides a ligand contact to Mg(2+). Residue histidine 156 participates in Mg(2+) binding.

Belongs to the DHBP synthase family. As to quaternary structure, homodimer. Mg(2+) is required as a cofactor. Mn(2+) serves as cofactor.

The enzyme catalyses D-ribulose 5-phosphate = (2S)-2-hydroxy-3-oxobutyl phosphate + formate + H(+). It participates in cofactor biosynthesis; riboflavin biosynthesis; 2-hydroxy-3-oxobutyl phosphate from D-ribulose 5-phosphate: step 1/1. In terms of biological role, catalyzes the conversion of D-ribulose 5-phosphate to formate and 3,4-dihydroxy-2-butanone 4-phosphate. This is 3,4-dihydroxy-2-butanone 4-phosphate synthase from Aliivibrio fischeri (Vibrio fischeri).